A 243-amino-acid chain; its full sequence is Small ribosomal subunit protein eS4 (243 aa).

The 63-residue stretch at 43 to 105 folds into the S4 RNA-binding domain; it reads IPLIYIVRDY…TGEHYRVLPN (63 aa).

It belongs to the eukaryotic ribosomal protein eS4 family. Part of the 30S ribosomal subunit.

In Thermococcus kodakarensis (strain ATCC BAA-918 / JCM 12380 / KOD1) (Pyrococcus kodakaraensis (strain KOD1)), this protein is Small ribosomal subunit protein eS4.